The primary structure comprises 274 residues: Large ribosomal subunit protein uL2 (274 aa).

The segment at 222–274 is disordered; it reads GVAMNPVDHPHGGGEGRGKGHHPQSPWGQLAKGYKTRRGKKASDKLIVRRRNG. Over residues 229–239 the composition is skewed to basic and acidic residues; that stretch reads DHPHGGGEGRG.

It belongs to the universal ribosomal protein uL2 family. As to quaternary structure, part of the 50S ribosomal subunit. Forms a bridge to the 30S subunit in the 70S ribosome.

Functionally, one of the primary rRNA binding proteins. Required for association of the 30S and 50S subunits to form the 70S ribosome, for tRNA binding and peptide bond formation. It has been suggested to have peptidyltransferase activity; this is somewhat controversial. Makes several contacts with the 16S rRNA in the 70S ribosome. This Thermosipho africanus (strain TCF52B) protein is Large ribosomal subunit protein uL2.